The primary structure comprises 954 residues: Glycine dehydrogenase (decarboxylating) (954 aa).

The residue at position 701 (K701) is an N6-(pyridoxal phosphate)lysine.

The protein belongs to the GcvP family. In terms of assembly, the glycine cleavage system is composed of four proteins: P, T, L and H. Requires pyridoxal 5'-phosphate as cofactor.

The catalysed reaction is N(6)-[(R)-lipoyl]-L-lysyl-[glycine-cleavage complex H protein] + glycine + H(+) = N(6)-[(R)-S(8)-aminomethyldihydrolipoyl]-L-lysyl-[glycine-cleavage complex H protein] + CO2. Its function is as follows. The glycine cleavage system catalyzes the degradation of glycine. The P protein binds the alpha-amino group of glycine through its pyridoxal phosphate cofactor; CO(2) is released and the remaining methylamine moiety is then transferred to the lipoamide cofactor of the H protein. In Bordetella pertussis (strain Tohama I / ATCC BAA-589 / NCTC 13251), this protein is Glycine dehydrogenase (decarboxylating).